The following is a 130-amino-acid chain: Ion transport peptide (130 aa).

Disulfide bonds link Cys62–Cys98, Cys78–Cys94, and Cys81–Cys107. Leucine amide is present on Leu127.

This sequence belongs to the arthropod CHH/MIH/GIH/VIH hormone family. In terms of tissue distribution, brain and corpus cardiacum.

The protein resides in the secreted. Stimulates salt and water reabsorption and inhibits acid secretion in the ileum of S.gregaria. The protein is Ion transport peptide of Schistocerca gregaria (Desert locust).